Reading from the N-terminus, the 37-residue chain is Large ribosomal subunit protein bL36 (37 aa).

Belongs to the bacterial ribosomal protein bL36 family.

The sequence is that of Large ribosomal subunit protein bL36 from Gloeobacter violaceus (strain ATCC 29082 / PCC 7421).